We begin with the raw amino-acid sequence, 645 residues long: UvrABC system protein C (645 aa).

The interval 1 to 20 (MTDLPPHSSHHPADQGEPLV) is disordered. The GIY-YIG domain occupies 40–118 (YSPGVYRMLS…IKRMKPRFNI (79 aa)). Residues 228 to 263 (TELQQRLVAEMEQASQELNYERAASIRDRIRGFASI) enclose the UVR domain.

Belongs to the UvrC family. Interacts with UvrB in an incision complex.

The protein resides in the cytoplasm. The UvrABC repair system catalyzes the recognition and processing of DNA lesions. UvrC both incises the 5' and 3' sides of the lesion. The N-terminal half is responsible for the 3' incision and the C-terminal half is responsible for the 5' incision. The chain is UvrABC system protein C from Gluconobacter oxydans (strain 621H) (Gluconobacter suboxydans).